A 253-amino-acid chain; its full sequence is tRNA1(Val) (adenine(37)-N6)-methyltransferase (253 aa).

It belongs to the methyltransferase superfamily. tRNA (adenine-N(6)-)-methyltransferase family.

It localises to the cytoplasm. The enzyme catalyses adenosine(37) in tRNA1(Val) + S-adenosyl-L-methionine = N(6)-methyladenosine(37) in tRNA1(Val) + S-adenosyl-L-homocysteine + H(+). In terms of biological role, specifically methylates the adenine in position 37 of tRNA(1)(Val) (anticodon cmo5UAC). The chain is tRNA1(Val) (adenine(37)-N6)-methyltransferase from Dickeya chrysanthemi (strain Ech1591) (Dickeya zeae (strain Ech1591)).